Consider the following 206-residue polypeptide: Small ribosomal subunit protein uS4 (206 aa).

One can recognise an S4 RNA-binding domain in the interval 96–156 (TRLDNVVYRM…EKSRTQARIK (61 aa)).

This sequence belongs to the universal ribosomal protein uS4 family. Part of the 30S ribosomal subunit. Contacts protein S5. The interaction surface between S4 and S5 is involved in control of translational fidelity.

One of the primary rRNA binding proteins, it binds directly to 16S rRNA where it nucleates assembly of the body of the 30S subunit. In terms of biological role, with S5 and S12 plays an important role in translational accuracy. The sequence is that of Small ribosomal subunit protein uS4 from Shewanella amazonensis (strain ATCC BAA-1098 / SB2B).